An 89-amino-acid chain; its full sequence is Co-chaperonin GroES (89 aa).

Belongs to the GroES chaperonin family. In terms of assembly, heptamer of 7 subunits arranged in a ring. Interacts with the chaperonin GroEL.

It is found in the cytoplasm. In terms of biological role, together with the chaperonin GroEL, plays an essential role in assisting protein folding. The GroEL-GroES system forms a nano-cage that allows encapsulation of the non-native substrate proteins and provides a physical environment optimized to promote and accelerate protein folding. GroES binds to the apical surface of the GroEL ring, thereby capping the opening of the GroEL channel. The chain is Co-chaperonin GroES from Pseudothermotoga lettingae (strain ATCC BAA-301 / DSM 14385 / NBRC 107922 / TMO) (Thermotoga lettingae).